Reading from the N-terminus, the 165-residue chain is Methyl-coenzyme M reductase II operon protein D (165 aa).

As to quaternary structure, MCR is composed of three subunits: alpha, beta, and gamma. The function of protein D is not known.

This Methanothermus fervidus (strain ATCC 43054 / DSM 2088 / JCM 10308 / V24 S) protein is Methyl-coenzyme M reductase II operon protein D (mrtD).